The chain runs to 155 residues: Small ribosomal subunit protein uS7 (155 aa).

This sequence belongs to the universal ribosomal protein uS7 family. As to quaternary structure, part of the 30S ribosomal subunit. Contacts proteins S9 and S11.

One of the primary rRNA binding proteins, it binds directly to 16S rRNA where it nucleates assembly of the head domain of the 30S subunit. Is located at the subunit interface close to the decoding center, probably blocks exit of the E-site tRNA. This Mycoplasma mycoides subsp. mycoides SC (strain CCUG 32753 / NCTC 10114 / PG1) protein is Small ribosomal subunit protein uS7.